Reading from the N-terminus, the 487-residue chain is WD repeat, SAM and U-box domain-containing protein 1 (487 aa).

WD repeat units lie at residues 10 to 47, 52 to 93, 95 to 134, 137 to 176, 179 to 227, 237 to 276, and 279 to 318; these read SHRD…ELPF, GHGY…AVLE, PGRS…LRRT, VNDT…LHAE, AHDL…SAGI, GQSA…LLYT, and QHDR…SAQG. One can recognise an SAM domain in the interval 347–411; it reads WSEEEVLAWL…MKKIEELKMV (65 aa). The U-box domain maps to 416-487; that stretch reads GTPDEFLCPI…MAIFRWSTSQ (72 aa).

The polypeptide is WD repeat, SAM and U-box domain-containing protein 1 (wdsub1) (Danio rerio (Zebrafish)).